A 351-amino-acid chain; its full sequence is Outer membrane protein A (351 aa).

Positions 1–21 (MKKTAIAITVALAGFATVAQA) are cleaved as a signal peptide. 8 beta stranded membrane passes run 27 to 37 (TWYTGAKLGWS), 55 to 66 (QLGAGAFGGYQV), 70 to 78 (VGFEMGYDW), 96 to 107 (QGVQLTAKLGYP), 112 to 120 (LDVYTRLGG), 147 to 156 (PVFAGGVEWA), 161 to 168 (IATRLEYQ), and 187 to 195 (LLSLGVSYR). 4 tandem repeats follow at residues 206–207 (AP), 208–209 (AP), 210–211 (AP), and 212–213 (AP). Residues 206–213 (APAPAPAP) are 4 X 2 AA tandem repeats of A-P. One can recognise an OmpA-like domain in the interval 215–343 (VQTKHFTLKS…RVEIEVKGIK (129 aa)). Cysteines 316 and 328 form a disulfide.

Belongs to the outer membrane OOP (TC 1.B.6) superfamily. OmpA family. As to quaternary structure, monomer and homodimer.

The protein localises to the cell outer membrane. Functionally, with TolR probably plays a role in maintaining the position of the peptidoglycan cell wall in the periplasm. Acts as a porin with low permeability that allows slow penetration of small solutes; an internal gate slows down solute passage. In terms of biological role, required for conjugation with F-type plasmids; probably serves as the mating receptor on recipient cells. This chain is Outer membrane protein A, found in Shigella dysenteriae.